Reading from the N-terminus, the 688-residue chain is Methionine--tRNA ligase (688 aa).

The 'HIGH' region signature appears at 13 to 23 (PYANGNFHIGH). Residues Cys-144, Cys-147, Cys-157, and Cys-160 each coordinate Zn(2+). The 'KMSKS' region motif lies at 342–346 (KMSKS). Lys-345 serves as a coordination point for ATP. The tRNA-binding domain maps to 582 to 688 (DFAKVDLRIA…PGAQPGMRIH (107 aa)).

Belongs to the class-I aminoacyl-tRNA synthetase family. MetG type 1 subfamily. Homodimer. Requires Zn(2+) as cofactor.

The protein resides in the cytoplasm. The catalysed reaction is tRNA(Met) + L-methionine + ATP = L-methionyl-tRNA(Met) + AMP + diphosphate. Is required not only for elongation of protein synthesis but also for the initiation of all mRNA translation through initiator tRNA(fMet) aminoacylation. The polypeptide is Methionine--tRNA ligase (Acidovorax sp. (strain JS42)).